A 299-amino-acid chain; its full sequence is NAD kinase (299 aa).

Asp75 acts as the Proton acceptor in catalysis. NAD(+) is bound by residues Asp75–Gly76, Asn149–Asp150, Arg177, Asp179, Thr190–Ser195, Ala214, and Gln248.

This sequence belongs to the NAD kinase family. Requires a divalent metal cation as cofactor.

It is found in the cytoplasm. The enzyme catalyses NAD(+) + ATP = ADP + NADP(+) + H(+). Involved in the regulation of the intracellular balance of NAD and NADP, and is a key enzyme in the biosynthesis of NADP. Catalyzes specifically the phosphorylation on 2'-hydroxyl of the adenosine moiety of NAD to yield NADP. The polypeptide is NAD kinase (Burkholderia thailandensis (strain ATCC 700388 / DSM 13276 / CCUG 48851 / CIP 106301 / E264)).